The primary structure comprises 86 residues: Small ribosomal subunit protein bS20 (86 aa).

Residues 1–11 (MANIKSAKKRA) show a composition bias toward basic residues. The interval 1–26 (MANIKSAKKRAITSEKNRQHNASRRS) is disordered.

The protein belongs to the bacterial ribosomal protein bS20 family.

In terms of biological role, binds directly to 16S ribosomal RNA. The sequence is that of Small ribosomal subunit protein bS20 from Pseudoalteromonas translucida (strain TAC 125).